We begin with the raw amino-acid sequence, 64 residues long: MAKKGTRVVVTLECTEARTSSDPKRSNGVSRYTTEKNRRNTTERLELKKFNPHLNRMTIHKEIK.

Composition is skewed to basic and acidic residues over residues 16 to 25 (EARTSSDPKR) and 33 to 42 (TTEKNRRNTT). Positions 16–42 (EARTSSDPKRSNGVSRYTTEKNRRNTT) are disordered.

Belongs to the bacterial ribosomal protein bL33 family.

This is Large ribosomal subunit protein bL33 from Prochlorococcus marinus (strain MIT 9301).